The following is a 287-amino-acid chain: 4,4'-diapophytoene synthase (287 aa).

(2E,6E)-farnesyl diphosphate is bound by residues 18–21 (HSKS), tyrosine 41, and arginine 45. The Mg(2+) site is built by aspartate 48 and aspartate 52. Glutamine 165 serves as a coordination point for (2E,6E)-farnesyl diphosphate. Asparagine 168 is a Mg(2+) binding site. Arginine 171 lines the (2E,6E)-farnesyl diphosphate pocket. Aspartate 172 contacts Mg(2+). Tyrosine 248 provides a ligand contact to (2E,6E)-farnesyl diphosphate.

It belongs to the phytoene/squalene synthase family. CrtM subfamily. Requires Mg(2+) as cofactor.

It carries out the reaction 2 (2E,6E)-farnesyl diphosphate = 15-cis-4,4'-diapophytoene + 2 diphosphate. The protein operates within carotenoid biosynthesis; staphyloxanthin biosynthesis; staphyloxanthin from farnesyl diphosphate: step 1/5. Involved in the biosynthesis of the yellow-orange carotenoid staphyloxanthin, which plays a role in the virulence via its protective function against oxidative stress. Catalyzes the head-to-head condensation of two molecules of farnesyl diphosphate (FPP) into the colorless C(30) carotenoid 4,4'-diapophytoene (dehydrosqualene). This Staphylococcus aureus (strain NCTC 8325 / PS 47) protein is 4,4'-diapophytoene synthase.